Consider the following 415-residue polypeptide: MAAIINQRVEQGESSMGGAKPALLHRITGHVARINDVILLSKDEGVWTASDDRSVRLYLKRDNDQFWPSIHHFMPVAPTSLYYSEETYKLLVGLINGNVYEFSVADDFNSMTESRKWTCHAGPISGLGFALSSELIFSCSRDKSIVWHCSENSNKMGSYLLENSCTAMVIDLPFVFVGDHGGHVTVLRIVDNQPNLVSKLSAHTNAITSLTWDGNKKVLYSGSSDHLIIMWDIGGGRGEAYELNGHNGKVTTLCAAPAAKRLFSADEHGKLMCWDMNCKRVETPEWKTSDCCQKCNQPFFWNLQAMWQRKVVGLRQHHCRTCGSAVCGSCCDNWTTYPPMGYETKIRICNDCNARMKDNPQNFNLTPLAIPHEIHTGITAMHLQETLGLLVTSGQNRVIMIWDVRSVCSAPSGSQ.

WD repeat units follow at residues 71 to 103 (HHFMPVAPTSLYYSEETYKLLVGLINGNVYEFS), 119 to 148 (CHAGPISGLGFALSSELIFSCSRDKSIVWH), 202 to 232 (AHTNAITSLTWDGNKKVLYSGSSDHLIIMWD), and 245 to 284 (GHNGKVTTLCAAPAAKRLFSADEHGKLMCWDMNCKRVETP). Residues 286-357 (WKTSDCCQKC…ICNDCNARMK (72 aa)) form an FYVE-type zinc finger. Zn(2+) is bound by residues C292, C295, C319, C322, C327, C330, C349, and C352. One copy of the WD 5 repeat lies at 373–403 (EIHTGITAMHLQETLGLLVTSGQNRVIMIWD).

Functionally, plays a role in coelomocyte endocytosis. This chain is WD repeat and FYVE domain-containing protein 2 (wdfy-2), found in Caenorhabditis elegans.